The following is a 207-amino-acid chain: Dephospho-CoA kinase (207 aa).

One can recognise a DPCK domain in the interval 5 to 202 (VVGLTGGIGS…LQYLKLSAEK (198 aa)). 13–18 (GSGKST) is a binding site for ATP.

The protein belongs to the CoaE family.

It localises to the cytoplasm. The enzyme catalyses 3'-dephospho-CoA + ATP = ADP + CoA + H(+). Its pathway is cofactor biosynthesis; coenzyme A biosynthesis; CoA from (R)-pantothenate: step 5/5. In terms of biological role, catalyzes the phosphorylation of the 3'-hydroxyl group of dephosphocoenzyme A to form coenzyme A. In Dechloromonas aromatica (strain RCB), this protein is Dephospho-CoA kinase.